Consider the following 556-residue polypeptide: Glypican-4 (556 aa).

A signal peptide spans 1 to 18 (MARFGLPALLCTLAVLSA). Ser357 is subject to Phosphoserine. O-linked (Xyl...) (glycosaminoglycan) serine glycans are attached at residues Ser494, Ser498, and Ser500. A glycan (N-linked (GlcNAc...) asparagine) is linked at Asn514. Residue Ser529 is the site of GPI-anchor amidated serine attachment. A propeptide spans 530–556 (AGVRPGAQAYLLTVFCILFLVMQREWR) (removed in mature form).

Belongs to the glypican family.

The protein localises to the cell membrane. It is found in the secreted. It localises to the extracellular space. Functionally, cell surface proteoglycan that bears heparan sulfate. May be involved in the development of kidney tubules and of the central nervous system. The polypeptide is Glypican-4 (GPC4) (Homo sapiens (Human)).